A 373-amino-acid polypeptide reads, in one-letter code: Queuine tRNA-ribosyltransferase (373 aa).

Residue D93 is the Proton acceptor of the active site. Substrate is bound by residues 93–97, D147, Q190, and G219; that span reads DSGGF. The RNA binding stretch occupies residues 250 to 256; it reads GVGEPVD. Catalysis depends on D269, which acts as the Nucleophile. Residues 274-278 form an RNA binding; important for wobble base 34 recognition region; that stretch reads TRLAR. Positions 307, 309, 312, and 338 each coordinate Zn(2+).

The protein belongs to the queuine tRNA-ribosyltransferase family. As to quaternary structure, homodimer. Within each dimer, one monomer is responsible for RNA recognition and catalysis, while the other monomer binds to the replacement base PreQ1. Requires Zn(2+) as cofactor.

It catalyses the reaction 7-aminomethyl-7-carbaguanine + guanosine(34) in tRNA = 7-aminomethyl-7-carbaguanosine(34) in tRNA + guanine. Its pathway is tRNA modification; tRNA-queuosine biosynthesis. Functionally, catalyzes the base-exchange of a guanine (G) residue with the queuine precursor 7-aminomethyl-7-deazaguanine (PreQ1) at position 34 (anticodon wobble position) in tRNAs with GU(N) anticodons (tRNA-Asp, -Asn, -His and -Tyr). Catalysis occurs through a double-displacement mechanism. The nucleophile active site attacks the C1' of nucleotide 34 to detach the guanine base from the RNA, forming a covalent enzyme-RNA intermediate. The proton acceptor active site deprotonates the incoming PreQ1, allowing a nucleophilic attack on the C1' of the ribose to form the product. After dissociation, two additional enzymatic reactions on the tRNA convert PreQ1 to queuine (Q), resulting in the hypermodified nucleoside queuosine (7-(((4,5-cis-dihydroxy-2-cyclopenten-1-yl)amino)methyl)-7-deazaguanosine). The sequence is that of Queuine tRNA-ribosyltransferase from Fusobacterium nucleatum subsp. nucleatum (strain ATCC 25586 / DSM 15643 / BCRC 10681 / CIP 101130 / JCM 8532 / KCTC 2640 / LMG 13131 / VPI 4355).